An 803-amino-acid chain; its full sequence is Bromodomain-containing protein 2 (803 aa).

Methionine 1 carries the post-translational modification N-acetylmethionine. Threonine 6 bears the Phosphothreonine mark. Serine 37 carries the phosphoserine modification. Positions 53-73 (ALQLTPANPPPPEVSNPKKPG) are disordered. The 107-residue stretch at 74 to 180 (RVTNQLQYLH…KIFLQKVASM (107 aa)) folds into the Bromo 1 domain. Positions 112, 155, 156, 157, 160, and 161 each coordinate a protein. Disordered stretches follow at residues 268-348 (PPAQ…KLSE), 456-652 (EPLE…KRQL), and 739-803 (EKRL…SDSG). Low complexity predominate over residues 285-298 (TTTPTPTAILAPGS). Residues serine 298 and serine 301 each carry the phosphoserine modification. A compositionally biased stretch (basic and acidic residues) spans 316–332 (VRRESGRPIKPPRKDLP). In terms of domain architecture, Bromo 2 spans 344–453 (GKLSEQLKHC…DVFEFRYAKM (110 aa)). The span at 481 to 515 (SSEESSSESSSEEEEEEDEDEEEEEEESESSDSEE) shows a compositional bias: acidic residues. Residues 545–567 (KPKRKREKKEKKKKRKAEKHRGR) are compositionally biased toward basic residues. The Nuclear localization signal signature appears at 556–560 (KKKRK). Over residues 623–632 (KTAPPALPAG) the composition is skewed to low complexity. The NET domain occupies 634–716 (DSEEEEESRP…SCLRKKPRKP (83 aa)). Residue serine 635 is modified to Phosphoserine. A compositionally biased stretch (basic and acidic residues) spans 641–652 (SRPMSYDEKRQL). Positions 777–797 (SASSSSSDSSSSSSSSSSSDT) are enriched in low complexity.

Belongs to the BET family. In terms of assembly, homodimer. Interacts with E2F1. Interacts with (acetylated) STAT3; promoting STAT3 recruitment to chromatin. Interacts with CTCF; promoting BRD2 recruitment to chromatin.

It is found in the nucleus. Its subcellular location is the chromosome. Its function is as follows. Chromatin reader protein that specifically recognizes and binds histone H4 acetylated at 'Lys-5' and 'Lys-12' (H4K5ac and H4K12ac, respectively), thereby controlling gene expression and remodeling chromatin structures. Recruits transcription factors and coactivators to target gene sites, and activates RNA polymerase II machinery for transcriptional elongation. Plays a key role in genome compartmentalization via its association with CTCF and cohesin: recruited to chromatin by CTCF and promotes formation of topologically associating domains (TADs) via its ability to bind acetylated histones, contributing to CTCF boundary formation and enhancer insulation. Also recognizes and binds acetylated non-histone proteins, such as STAT3. Involved in inflammatory response by regulating differentiation of naive CD4(+) T-cells into T-helper Th17: recognizes and binds STAT3 acetylated at 'Lys-87', promoting STAT3 recruitment to chromatin. In addition to acetylated lysines, also recognizes and binds lysine residues on histones that are both methylated and acetylated on the same side chain to form N6-acetyl-N6-methyllysine (Kacme), an epigenetic mark of active chromatin associated with increased transcriptional initiation. Specifically binds histone H4 acetyl-methylated at 'Lys-5' and 'Lys-12' (H4K5acme and H4K12acme, respectively). The chain is Bromodomain-containing protein 2 (BRD2) from Bos taurus (Bovine).